Consider the following 1119-residue polypeptide: Protein translocase subunit SecA (1119 aa).

ATP contacts are provided by residues Gln-175, 213-217, and Asp-714; that span reads GEGKT. Cys-1106, Cys-1108, Cys-1117, and Cys-1118 together coordinate Zn(2+).

Belongs to the SecA family. In terms of assembly, monomer and homodimer. Part of the essential Sec protein translocation apparatus which comprises SecA, SecYEG and auxiliary proteins SecDF. Other proteins may also be involved. The cofactor is Zn(2+).

The protein localises to the cell inner membrane. It is found in the cytoplasm. The enzyme catalyses ATP + H2O + cellular proteinSide 1 = ADP + phosphate + cellular proteinSide 2.. Part of the Sec protein translocase complex. Interacts with the SecYEG preprotein conducting channel. Has a central role in coupling the hydrolysis of ATP to the transfer of proteins into and across the cell membrane, serving as an ATP-driven molecular motor driving the stepwise translocation of polypeptide chains across the membrane. In Azobacteroides pseudotrichonymphae genomovar. CFP2, this protein is Protein translocase subunit SecA.